The following is a 667-amino-acid chain: Tail spike protein (667 aa).

Residues E360, D393, and D396 contribute to the active site.

The protein belongs to the P22likevirus tail fiber protein family. As to quaternary structure, homotrimer. Interacts with the host O-antigen lipopolysaccharides; this interaction induces cleavage of host O-antigen. Interacts with tail hub protein gp10; this interaction anchors 6 fibers onto the tail hub hexamer.

It is found in the virion. Its function is as follows. Structural component of the short non-contractile tail. The tail comprises six spikes that mediate primary attachment to the host cell lipopolysaccharides (LPS) and display endorhamnosidase enzymatic activity, hydrolyzing the alpha-1,3-O-glycosidic linkage between rhamnose and galactose of the O-antigen polysaccharide. Digestion of the LPS brings the capsid near the cell outer membrane. This is Tail spike protein (9) from Salmonella phage P22 (Bacteriophage P22).